Consider the following 287-residue polypeptide: Oxaloacetate decarboxylase (287 aa).

Ser-50 contributes to the substrate binding site. Asp-88 lines the Mg(2+) pocket. Substrate is bound by residues Arg-159 and His-235.

This sequence belongs to the isocitrate lyase/PEP mutase superfamily. Oxaloacetate decarboxylase family. Homotetramer; dimer of dimers. Mg(2+) is required as a cofactor.

It catalyses the reaction oxaloacetate + H(+) = pyruvate + CO2. Functionally, catalyzes the decarboxylation of oxaloacetate into pyruvate. Seems to play a role in maintaining cellular concentrations of bicarbonate and pyruvate. In Pseudomonas paraeruginosa (strain DSM 24068 / PA7) (Pseudomonas aeruginosa (strain PA7)), this protein is Oxaloacetate decarboxylase.